A 189-amino-acid chain; its full sequence is Peptidyl-tRNA hydrolase (189 aa).

Position 15 (Phe15) interacts with tRNA. Residue His20 is the Proton acceptor of the active site. Positions 65, 67, and 113 each coordinate tRNA.

The protein belongs to the PTH family. Monomer.

Its subcellular location is the cytoplasm. It carries out the reaction an N-acyl-L-alpha-aminoacyl-tRNA + H2O = an N-acyl-L-amino acid + a tRNA + H(+). Hydrolyzes ribosome-free peptidyl-tRNAs (with 1 or more amino acids incorporated), which drop off the ribosome during protein synthesis, or as a result of ribosome stalling. Its function is as follows. Catalyzes the release of premature peptidyl moieties from peptidyl-tRNA molecules trapped in stalled 50S ribosomal subunits, and thus maintains levels of free tRNAs and 50S ribosomes. This chain is Peptidyl-tRNA hydrolase, found in Phytoplasma australiense.